Here is a 1401-residue protein sequence, read N- to C-terminus: DNA polymerase III PolC-type (1401 aa).

The Exonuclease domain maps to 388–543; sequence FVVFDIETTG…EDAKATAEIF (156 aa).

The protein belongs to the DNA polymerase type-C family. PolC subfamily.

It localises to the cytoplasm. It catalyses the reaction DNA(n) + a 2'-deoxyribonucleoside 5'-triphosphate = DNA(n+1) + diphosphate. In terms of biological role, required for replicative DNA synthesis. This DNA polymerase also exhibits 3' to 5' exonuclease activity. This chain is DNA polymerase III PolC-type, found in Caldanaerobacter subterraneus subsp. tengcongensis (strain DSM 15242 / JCM 11007 / NBRC 100824 / MB4) (Thermoanaerobacter tengcongensis).